Consider the following 1321-residue polypeptide: Bile salt export pump (1321 aa).

The Cytoplasmic segment spans residues 1–62 (MSDSVILRSV…FSSSKDNWLM (62 aa)). The ABC transmembrane type-1 1 domain occupies 62–385 (MFMGSVCALL…ASSCLEIFST (324 aa)). Residues 63–83 (FMGSVCALLHGMAQPGMIIVF) traverse the membrane as a helical segment. Residues 84 to 147 (GILTDIFVEY…VIKFSGIYAG (64 aa)) lie on the Extracellular side of the membrane. 4 N-linked (GlcNAc...) asparagine glycosylation sites follow: Asn109, Asn116, Asn122, and Asn125. Residues 148-168 (VGVAVLILGYFQIRLWVITGA) form a helical membrane-spanning segment. The Cytoplasmic segment spans residues 169-215 (RQIRKMRKFYFRRIMRMEIGWFDCTSVGELNSRFSDDINKIDEAIAD). Residues 216-236 (QMALFLQRLSTALSGLLLGFY) form a helical membrane-spanning segment. Residues 237 to 240 (RGWK) lie on the Extracellular side of the membrane. Residues 241-261 (LTLVILAVSPLIGIGAAVIGL) traverse the membrane as a helical segment. Residues 262-319 (SVAKFTELELKAYAKAGSIADEVLSSIRTVAAFGGENKEVERYEKNLMFAQRWGIWKG) lie on the Cytoplasmic side of the membrane. Residues 320–340 (MVMGFFTGYMWCLIFFCYALA) form a helical membrane-spanning segment. At 341 to 353 (FWYGSRLVLDEGE) the chain is on the extracellular side. Residues 354 to 374 (YTPGTLIQIFLCVIIAAMNIG) traverse the membrane as a helical segment. The Cytoplasmic segment spans residues 375-755 (NASSCLEIFS…KYNISEWPYI (381 aa)). Residues 420 to 656 (IEFHNVTFHY…KGVYFMLVTL (237 aa)) form the ABC transporter 1 domain. Residue 455–462 (GSSGAGKS) coordinates ATP. The residue at position 586 (Thr586) is a Phosphothreonine. Position 587 is a phosphoserine (Ser587). An interaction with HAX1 region spans residues 651 to 674 (FMLVTLQSQEDNTHKETGIKGKDT). Residues 662 to 684 (NTHKETGIKGKDTTEGDTPERTF) show a composition bias toward basic and acidic residues. The segment at 662–722 (NTHKETGIKG…PLAIGDHKSS (61 aa)) is disordered. A phosphoserine mark is found at Ser692, Ser703, and Ser706. Residues 755-1043 (ILVGALCAAI…TFSYTPSYAK (289 aa)) form the ABC transmembrane type-1 2 domain. Residues 756-776 (LVGALCAAINGAVTPIYSLLF) traverse the membrane as a helical segment. Topologically, residues 777–794 (SQILKTFSLVDKEQQRSE) are extracellular. Residues 795-815 (IYSMCLFFVILGCVSLFTQFL) traverse the membrane as a helical segment. The Cytoplasmic portion of the chain corresponds to 816–869 (QGYNFAKSGELLTKRLRKFGFKAMLRQDIGWFDDLKNNPGVLTTRLATDASQVQ). Helical transmembrane passes span 870 to 890 (GATG…FVAV) and 891 to 911 (LIAF…FPFL). Topologically, residues 912 to 979 (ALSGAVQTKM…SYKTAIRKAN (68 aa)) are cytoplasmic. Residues 980–1000 (VYGLCYAFSQGISFLANSAAY) traverse the membrane as a helical segment. Residues 1001–1011 (RYGGYLIVYED) are Extracellular-facing. Residues 1012–1032 (LNFSYVFRVVSSIAMSATAVG) traverse the membrane as a helical segment. The Cytoplasmic portion of the chain corresponds to 1033–1321 (RTFSYTPSYA…KLVITGAPIS (289 aa)). Residues 1078-1316 (IDFIDCKFTY…KGAYYKLVIT (239 aa)) enclose the ABC transporter 2 domain. 1113–1120 (GSSGCGKS) contacts ATP. Phosphoserine is present on Ser1321.

The protein belongs to the ABC transporter superfamily. ABCB family. Multidrug resistance exporter (TC 3.A.1.201) subfamily. In terms of assembly, interacts with HAX1. Interacts with the adapter protein complex 2 (AP-2) throught AP2A2 or AP2A1; this interaction regulates cell membrane expression of ABCB11 through its internalization in a clathrin-dependent manner and its subsequent degradation. N-glycosylated. In terms of processing, ubiquitinated; short-chain ubiquitination regulates cell-Surface expression of ABCB11. Expressed predominantly, if not exclusively in the liver, where it was further localized to the canalicular microvilli and to subcanalicular vesicles of the hepatocytes by in situ.

The protein localises to the apical cell membrane. The protein resides in the recycling endosome membrane. It is found in the endosome. It localises to the cell membrane. The catalysed reaction is cholate(in) + ATP + H2O = cholate(out) + ADP + phosphate + H(+). The enzyme catalyses taurocholate(in) + ATP + H2O = taurocholate(out) + ADP + phosphate + H(+). It carries out the reaction glycocholate(in) + ATP + H2O = glycocholate(out) + ADP + phosphate + H(+). It catalyses the reaction glycochenodeoxycholate(in) + ATP + H2O = glycochenodeoxycholate(out) + ADP + phosphate + H(+). The catalysed reaction is taurochenodeoxycholate(in) + ATP + H2O = taurochenodeoxycholate(out) + ADP + phosphate + H(+). The enzyme catalyses glycoursodeoxycholate(in) + ATP + H2O = glycoursodeoxycholate(out) + ADP + phosphate + H(+). It carries out the reaction tauroursodeoxycholate(in) + ATP + H2O = tauroursodeoxycholate(out) + ADP + phosphate + H(+). It catalyses the reaction taurodeoxycholate(in) + ATP + H2O = taurodeoxycholate(out) + ADP + phosphate + H(+). The catalysed reaction is taurolithocholate 3-sulfate(in) + ATP + H2O = taurolithocholate 3-sulfate(out) + ADP + phosphate + H(+). The enzyme catalyses pravastatin(in) + ATP + H2O = pravastatin(out) + ADP + phosphate + H(+). The uptake of taurocholate is inhibited by taurolithocholate sulfate with an IC(50) of 9 uM. Pravastatin competitively inhibits the transport of taurocholic acid. Cyclosporin A, glibenclamide, rifampicin and troglitazonestrongly competitively inhibit the transport activity of taurocholate. The canalicular transport activity of taurocholate is strongly dependent on canalicular membrane cholesterol content. The uptake of taurocholate is increased by short- and medium-chain fatty acids. Cholesterol increases transport capacity of taurocholate without affecting the affinity for the substrate. Catalyzes the transport of the major hydrophobic bile salts, such as taurine and glycine-conjugated cholic acid across the canalicular membrane of hepatocytes in an ATP-dependent manner, therefore participates in hepatic bile acid homeostasis and consequently to lipid homeostasis through regulation of biliary lipid secretion in a bile salts dependent manner. Transports taurine-conjugated bile salts more rapidly than glycine-conjugated bile salts. Also transports non-bile acid compounds, such as pravastatin and fexofenadine in an ATP-dependent manner and may be involved in their biliary excretion. The chain is Bile salt export pump from Mus musculus (Mouse).